Reading from the N-terminus, the 208-residue chain is Translation initiation factor 2 subunit beta (208 aa).

Residues 144–202 (GIEEGKEYTVEISEVGSSGEGRASFRGFTIFVPGTKKGETVKVKIKKIKNDVAIAEVVS) enclose the TRAM domain.

Belongs to the eIF-2-beta/eIF-5 family. Heterotrimer composed of an alpha, a beta and a gamma chain.

Functionally, eIF-2 functions in the early steps of protein synthesis by forming a ternary complex with GTP and initiator tRNA. The chain is Translation initiation factor 2 subunit beta (eif2b) from Thermoplasma volcanium (strain ATCC 51530 / DSM 4299 / JCM 9571 / NBRC 15438 / GSS1).